Reading from the N-terminus, the 251-residue chain is MVKKSYPEVKEEYKKAVQRCKRKLRGLIAEKHCAPIVLRLAWHSAGTFDVKTKTGGPFGTIRHPQELAHDANNGLDIAVRLLDPIKELFPILSYADFYQLAGVVAVEITGGPEIPFHPGRLDKVEPPPEGRLPQATKGVDHLRDVFGRMGLNDKDIVALSGGHTLGRCHKERSGFEGAWTPNPLIFDNSYFKEILSGEKEGLLQLPTDKALLDDPLFLPFVEKYAADEDAFFEDYTEAHLKLSELGFADKE.

Histidine 43 serves as the catalytic Proton acceptor. Histidine 163 is a heme b binding site. K(+) is bound by residues threonine 164, threonine 180, asparagine 182, isoleucine 185, and aspartate 187.

The protein belongs to the peroxidase family. Ascorbate peroxidase subfamily. Heme b serves as cofactor. As to expression, detected in bundle sheath cells, the photosynthetic cells that surround the phloem and xylem.

It localises to the cytoplasm. The enzyme catalyses L-ascorbate + H2O2 = L-dehydroascorbate + 2 H2O. Functionally, plays a key role in hydrogen peroxide removal. This Arabidopsis thaliana (Mouse-ear cress) protein is L-ascorbate peroxidase 2, cytosolic.